A 402-amino-acid chain; its full sequence is S-adenosylmethionine synthase (402 aa).

Residue 137 to 142 (GQGSAD) coordinates ATP.

This sequence belongs to the AdoMet synthase 2 family. Mg(2+) is required as a cofactor.

The enzyme catalyses L-methionine + ATP + H2O = S-adenosyl-L-methionine + phosphate + diphosphate. Its pathway is amino-acid biosynthesis; S-adenosyl-L-methionine biosynthesis; S-adenosyl-L-methionine from L-methionine: step 1/1. Functionally, catalyzes the formation of S-adenosylmethionine from methionine and ATP. This Pyrobaculum neutrophilum (strain DSM 2338 / JCM 9278 / NBRC 100436 / V24Sta) (Thermoproteus neutrophilus) protein is S-adenosylmethionine synthase.